The primary structure comprises 283 residues: tRNA dimethylallyltransferase (283 aa).

The segment at Asp5–Leu8 is interaction with substrate tRNA.

This sequence belongs to the IPP transferase family. Monomer. It depends on Mg(2+) as a cofactor.

The enzyme catalyses adenosine(37) in tRNA + dimethylallyl diphosphate = N(6)-dimethylallyladenosine(37) in tRNA + diphosphate. Functionally, catalyzes the transfer of a dimethylallyl group onto the adenine at position 37 in tRNAs that read codons beginning with uridine, leading to the formation of N6-(dimethylallyl)adenosine (i(6)A). This chain is tRNA dimethylallyltransferase, found in Desulforamulus reducens (strain ATCC BAA-1160 / DSM 100696 / MI-1) (Desulfotomaculum reducens).